We begin with the raw amino-acid sequence, 180 residues long: Large ribosomal subunit protein uL5 (180 aa).

It belongs to the universal ribosomal protein uL5 family. As to quaternary structure, part of the 50S ribosomal subunit; part of the 5S rRNA/L5/L18/L25 subcomplex. Contacts the 5S rRNA and the P site tRNA. Forms a bridge to the 30S subunit in the 70S ribosome.

Functionally, this is one of the proteins that bind and probably mediate the attachment of the 5S RNA into the large ribosomal subunit, where it forms part of the central protuberance. In the 70S ribosome it contacts protein S13 of the 30S subunit (bridge B1b), connecting the 2 subunits; this bridge is implicated in subunit movement. Contacts the P site tRNA; the 5S rRNA and some of its associated proteins might help stabilize positioning of ribosome-bound tRNAs. This chain is Large ribosomal subunit protein uL5, found in Xanthomonas oryzae pv. oryzae (strain MAFF 311018).